A 340-amino-acid polypeptide reads, in one-letter code: Glycerol-3-phosphate dehydrogenase [NAD(P)+] (340 aa).

NADPH contacts are provided by S13, W14, and K108. Residues K108, G139, and S141 each contribute to the sn-glycerol 3-phosphate site. Position 143 (A143) interacts with NADPH. Residues K194, D247, S257, R258, and N259 each coordinate sn-glycerol 3-phosphate. K194 acts as the Proton acceptor in catalysis. R258 lines the NADPH pocket. V282 and E284 together coordinate NADPH.

It belongs to the NAD-dependent glycerol-3-phosphate dehydrogenase family.

The protein resides in the cytoplasm. The catalysed reaction is sn-glycerol 3-phosphate + NAD(+) = dihydroxyacetone phosphate + NADH + H(+). The enzyme catalyses sn-glycerol 3-phosphate + NADP(+) = dihydroxyacetone phosphate + NADPH + H(+). It participates in membrane lipid metabolism; glycerophospholipid metabolism. Catalyzes the reduction of the glycolytic intermediate dihydroxyacetone phosphate (DHAP) to sn-glycerol 3-phosphate (G3P), the key precursor for phospholipid synthesis. This is Glycerol-3-phosphate dehydrogenase [NAD(P)+] from Streptococcus thermophilus (strain ATCC BAA-491 / LMD-9).